The primary structure comprises 507 residues: Maturase K (507 aa).

Belongs to the intron maturase 2 family. MatK subfamily.

The protein resides in the plastid. It is found in the chloroplast. In terms of biological role, usually encoded in the trnK tRNA gene intron. Probably assists in splicing its own and other chloroplast group II introns. In Lens culinaris (Lentil), this protein is Maturase K.